A 402-amino-acid polypeptide reads, in one-letter code: Flavohemoprotein (402 aa).

A Globin domain is found at methionine 1–alanine 136. Residue histidine 85 participates in heme b binding. Catalysis depends on charge relay system residues tyrosine 95 and glutamate 135. The interval glycine 147–glutamine 402 is reductase. In terms of domain architecture, FAD-binding FR-type spans lysine 150–asparagine 260. FAD is bound by residues tyrosine 188 and arginine 204 to serine 207. Glycine 273–proline 278 lines the NADP(+) pocket. Phenylalanine 394 to proline 397 is an FAD binding site.

The protein belongs to the globin family. Two-domain flavohemoproteins subfamily. It in the C-terminal section; belongs to the flavoprotein pyridine nucleotide cytochrome reductase family. Requires heme b as cofactor. The cofactor is FAD.

It catalyses the reaction 2 nitric oxide + NADPH + 2 O2 = 2 nitrate + NADP(+) + H(+). The catalysed reaction is 2 nitric oxide + NADH + 2 O2 = 2 nitrate + NAD(+) + H(+). In terms of biological role, is involved in NO detoxification in an aerobic process, termed nitric oxide dioxygenase (NOD) reaction that utilizes O(2) and NAD(P)H to convert NO to nitrate, which protects the bacterium from various noxious nitrogen compounds. Therefore, plays a central role in the inducible response to nitrosative stress. This is Flavohemoprotein from Bacillus cereus (strain ATCC 10987 / NRS 248).